The chain runs to 29 residues: Tail virion protein G7P (29 aa).

A helical transmembrane segment spans residues 8-28 (VVIALGLVISFGLGAITAGVL).

Belongs to the inovirus G7P protein family.

It is found in the virion. The protein resides in the host membrane. May initiate with G9P the virion concomitant assembly-budding process, by interacting with the packaging signal of the viral genome. The assembly-budding takes place at the host inner membrane. In turn, G7P and G9P are present at the end of the filamentous virion that emerges first from the bacterial host. This is Tail virion protein G7P (VII) from Escherichia coli (Bacteriophage I2-2).